Reading from the N-terminus, the 691-residue chain is Elongation factor G (691 aa).

The region spanning 8-282 (ERVRNIGIAA…AVVDYLPAPV (275 aa)) is the tr-type G domain. Residues 17-24 (AHIDAGKT), 81-85 (DTPGH), and 135-138 (NKMD) each bind GTP.

The protein belongs to the TRAFAC class translation factor GTPase superfamily. Classic translation factor GTPase family. EF-G/EF-2 subfamily.

It localises to the cytoplasm. Catalyzes the GTP-dependent ribosomal translocation step during translation elongation. During this step, the ribosome changes from the pre-translocational (PRE) to the post-translocational (POST) state as the newly formed A-site-bound peptidyl-tRNA and P-site-bound deacylated tRNA move to the P and E sites, respectively. Catalyzes the coordinated movement of the two tRNA molecules, the mRNA and conformational changes in the ribosome. In Prochlorococcus marinus (strain MIT 9303), this protein is Elongation factor G.